The sequence spans 123 residues: Integration host factor subunit alpha (123 aa).

A disordered region spans residues N97–T123. The span at A102 to A113 shows a compositional bias: low complexity.

This sequence belongs to the bacterial histone-like protein family. Heterodimer of an alpha and a beta chain.

Functionally, this protein is one of the two subunits of integration host factor, a specific DNA-binding protein that functions in genetic recombination as well as in transcriptional and translational control. This is Integration host factor subunit alpha from Rhodopseudomonas palustris (strain HaA2).